The primary structure comprises 51 residues: Large ribosomal subunit protein bL33 (51 aa).

The disordered stretch occupies residues 1–23; it reads MREKIKLESSAGTGHFYTTTKNK. The span at 10 to 20 shows a compositional bias: polar residues; sequence SAGTGHFYTTT.

Belongs to the bacterial ribosomal protein bL33 family.

The polypeptide is Large ribosomal subunit protein bL33 (Nitrosomonas eutropha (strain DSM 101675 / C91 / Nm57)).